We begin with the raw amino-acid sequence, 505 residues long: Activin receptor type-1B (505 aa).

A signal peptide spans 1–23; it reads MAESAGASSFFPLVVLLLAGSGG. The Extracellular portion of the chain corresponds to 24–126; sequence SGPRGIQALL…EHPSMWGPVE (103 aa). N43 carries N-linked (GlcNAc...) asparagine glycosylation. A helical transmembrane segment spans residues 127–149; that stretch reads LVGIIAGPVFLLFLIIIIVFLVI. Residues 150–505 lie on the Cytoplasmic side of the membrane; it reads NYHQRVYHNR…QLSVQEDVKI (356 aa). The GS domain maps to 177 to 206; it reads KTLQDLVYDLSTSGSGSGLPLFVQRTVART. Residues 207-497 form the Protein kinase domain; the sequence is IVLQEIIGKG…LRIKKTLSQL (291 aa). ATP is bound by residues 213 to 221 and K234; that span reads IGKGRFGEV. D335 (proton acceptor) is an active-site residue. Position 380 is a phosphotyrosine (Y380).

This sequence belongs to the protein kinase superfamily. TKL Ser/Thr protein kinase family. TGFB receptor subfamily. In terms of assembly, forms an activin receptor complex with activin receptor type-2 (ACVR2A or ACVR2B). Part of a complex consisting of MAGI2/ARIP1, ACVR2A, ACVR1B and SMAD3. Interacts with SMAD2 and SMAD3. Interacts with SMAD7. Interacts with FKBP1A. Interacts with IGSF1. Interacts with CRIPTO. Interacts with TDP2. Interacts with TSC22D1/TSC-22. It depends on Mg(2+) as a cofactor. Mn(2+) serves as cofactor. In terms of processing, autophosphorylated. Phosphorylated by activin receptor type-2 (ACVR2A or ACVR2B) in response to activin-binding at serine and threonine residues in the GS domain. Phosphorylation of ACVR1B by activin receptor type-2 regulates association with SMAD7. Ubiquitinated. Level of ubiquitination is regulated by the SMAD7-SMURF1 complex. Post-translationally, ubiquitinated. Urogenital ridge, testis, ovary, brain and lungs.

Its subcellular location is the cell membrane. It catalyses the reaction L-threonyl-[receptor-protein] + ATP = O-phospho-L-threonyl-[receptor-protein] + ADP + H(+). It carries out the reaction L-seryl-[receptor-protein] + ATP = O-phospho-L-seryl-[receptor-protein] + ADP + H(+). Activin receptor type-2 (ACVR2A or ACVR2B) activates the type-1 receptor through phosphorylation of its regulatory GS domain. Functionally, transmembrane serine/threonine kinase activin type-1 receptor forming an activin receptor complex with activin receptor type-2 (ACVR2A or ACVR2B). Transduces the activin signal from the cell surface to the cytoplasm and is thus regulating a many physiological and pathological processes including neuronal differentiation and neuronal survival, hair follicle development and cycling, FSH production by the pituitary gland, wound healing, extracellular matrix production, immunosuppression and carcinogenesis. Activin is also thought to have a paracrine or autocrine role in follicular development in the ovary. Within the receptor complex, type-2 receptors (ACVR2A and/or ACVR2B) act as a primary activin receptors whereas the type-1 receptors like ACVR1B act as downstream transducers of activin signals. Activin binds to type-2 receptor at the plasma membrane and activates its serine-threonine kinase. The activated receptor type-2 then phosphorylates and activates the type-1 receptor such as ACVR1B. Once activated, the type-1 receptor binds and phosphorylates the SMAD proteins SMAD2 and SMAD3, on serine residues of the C-terminal tail. Soon after their association with the activin receptor and subsequent phosphorylation, SMAD2 and SMAD3 are released into the cytoplasm where they interact with the common partner SMAD4. This SMAD complex translocates into the nucleus where it mediates activin-induced transcription. Inhibitory SMAD7, which is recruited to ACVR1B through FKBP1A, can prevent the association of SMAD2 and SMAD3 with the activin receptor complex, thereby blocking the activin signal. Activin signal transduction is also antagonized by the binding to the receptor of inhibin-B via the IGSF1 inhibin coreceptor. ACVR1B also phosphorylates TDP2. This is Activin receptor type-1B (Acvr1b) from Rattus norvegicus (Rat).